The chain runs to 83 residues: uncharacterized protein (83 aa).

This is an uncharacterized protein from Synechocystis sp. (strain ATCC 27184 / PCC 6803 / Kazusa).